The primary structure comprises 1309 residues: MAASFCGSRRYDVFPSFSKVDVRRSFLAHLLKELDRRLINTFTDHGMERNLPIDAELLSAIAESRISIVIFSKNYASSTWCLDELVEIHTCYKELAQIVVPVFFNVHPSQVKKQTGEFGKVFGKTCKGKPENRKLRWMQALAAVANIAGYDLQNWPDEAVMIEMVADDVSKKLFKSSNDFSDIVGIEAHLEAMSSILRLKSEKARMVGISGPSGIGKTTIAKALFSKLSPQFHLRAFVTYKRTNQDDYDMKLCWIEKFLSEILGQKDLKVLDLGAVEQSLMHKKVLIILDDVDDLELLKTLVGQTGWFGFGSRIVVITQDRQLLKAHDINLIYEVAFPSAHLALEIFCQSAFGKIYPPSDFRELSVEFAYLAGNLPLDLRVLGLAMKGKHREEWIEMLPRLRNDLDGKFKKTLRNYLPVIRKRVSNEEGGREKLKKGNKKLDLDEEFPGGEIYSDEIPSPTSNWKDTDDFDSGDIIPIIADKSTTIIPNRRHSNDDWCSFCEFLRNRIPPLNPFKCSANDVIDFLRTRQVLGSTEALVDRLIFSSEAFGIKPEENPFRSQAVTSYLKAARDMTREKECILVFSCHDNLDVDETSFIEAISKELHKQGFIPLTYNLLGRENLDEEMLYGSRVGIMILSSSYVSSRQSLDHLVAVMEHWKTTDLVIIPIYFKVRLSDICGLKGRFEAAFLQLHMSLQEDRVQKWKAAMSEIVSIGGHEWTKGSQFILAEEVVRNASLRLYLKSSKNLLGILALLNHSQSTDVEIMGIWGIAGIGKTSIAREIFELHAPHYDFCYFLQDFHLMCQMKRPRQLREDFISKLFGEEKGLGASDVKPSFMRDWFHKKTILLVLDDVSNARDAEAVIGGFGWFSHGHRIILTSRSKQVLVQCKVKKPYEIQKLSDFESFRLCKQYLDGENPVISELISCSSGIPLALKLLVSSVSKQYITNMKDHLQSLRKDPPTQIQEAFRRSFDGLDENEKNIFLDLACFFRGQSKDYAVLLLDACGFFTYMGICELIDESLISLVDNKIEMPIPFQDMGRIIVHEEDEDPCERSRLWDSKDIVDVLTNNSGTEAIEGIFLDASDLTCELSPTVFGKMYNLRLLKFYCSTSGNQCKLTLPHGLDTLPDELSLLHWENYPLVYLPQKFNPVNLVELNMPYSNMEKLWEGKKNLEKLKNIKLSHSRELTDILMLSEALNLEHIDLEGCTSLIDVSMSIPCCGKLVSLNMKDCSRLRSLPSMVDLTTLKLLNLSGCSEFEDIQDFAPNLEEIYLAGTSIRELPLSIRNLTELVTLDLENCERLQEMPSLPVEIIRRT.

In terms of domain architecture, TIR 1 spans 9–173; sequence RRYDVFPSFS…MVADDVSKKL (165 aa). Glu84 is an active-site residue. In terms of domain architecture, NB-ARC 1 spans 187–418; sequence EAHLEAMSSI…FKKTLRNYLP (232 aa). One can recognise an ALOG domain in the interval 488–585; it reads PNRRHSNDDW…KECILVFSCH (98 aa). Residues 574 to 737 form the TIR 2 domain; the sequence is REKECILVFS…EVVRNASLRL (164 aa). The region spanning 755 to 987 is the NB-ARC 2 domain; the sequence is SQSTDVEIMG…IFLDLACFFR (233 aa). Residues 1114–1141 adopt a coiled-coil conformation; the sequence is LPHGLDTLPDELSLLHWENYPLVYLPQK. 6 LRR repeats span residues 1145 to 1167, 1168 to 1195, 1214 to 1237, 1238 to 1258, 1259 to 1283, and 1285 to 1307; these read VNLV…KKNL, EKLK…NLEH, CGKL…MVDL, TTLK…QDFA, PNLE…NLTE, and VTLD…EIIR.

It belongs to the disease resistance TIR-NB-LRR family.

It carries out the reaction NAD(+) + H2O = ADP-D-ribose + nicotinamide + H(+). Disease resistance protein that cooperates with RPP2B to confer resistance to Hyaloperonospora parasitica isolate Cala2. The polypeptide is Disease resistance protein RPP2A (Arabidopsis thaliana (Mouse-ear cress)).